We begin with the raw amino-acid sequence, 149 residues long: Nucleoside diphosphate kinase (149 aa).

Positions 9, 57, 85, 91, 102, and 112 each coordinate ATP. His115 serves as the catalytic Pros-phosphohistidine intermediate.

Belongs to the NDK family. As to quaternary structure, homotetramer. It depends on Mg(2+) as a cofactor.

It localises to the cytoplasm. The catalysed reaction is a 2'-deoxyribonucleoside 5'-diphosphate + ATP = a 2'-deoxyribonucleoside 5'-triphosphate + ADP. It carries out the reaction a ribonucleoside 5'-diphosphate + ATP = a ribonucleoside 5'-triphosphate + ADP. Major role in the synthesis of nucleoside triphosphates other than ATP. The ATP gamma phosphate is transferred to the NDP beta phosphate via a ping-pong mechanism, using a phosphorylated active-site intermediate. The protein is Nucleoside diphosphate kinase of Synechocystis sp. (strain ATCC 27184 / PCC 6803 / Kazusa).